The primary structure comprises 197 residues: dTTP/UTP pyrophosphatase (197 aa).

The active-site Proton acceptor is the Asp70.

Belongs to the Maf family. YhdE subfamily. A divalent metal cation is required as a cofactor.

The protein localises to the cytoplasm. It catalyses the reaction dTTP + H2O = dTMP + diphosphate + H(+). It carries out the reaction UTP + H2O = UMP + diphosphate + H(+). Its function is as follows. Nucleoside triphosphate pyrophosphatase that hydrolyzes dTTP and UTP. May have a dual role in cell division arrest and in preventing the incorporation of modified nucleotides into cellular nucleic acids. The chain is dTTP/UTP pyrophosphatase (yceF2) from Escherichia coli O6:K15:H31 (strain 536 / UPEC).